Here is a 590-residue protein sequence, read N- to C-terminus: Aspartate--tRNA(Asp/Asn) ligase (590 aa).

E175 contributes to the L-aspartate binding site. The segment at 199-202 (QQYK) is aspartate. Positions 221 and 450 each coordinate L-aspartate. An ATP-binding site is contributed by 221 to 223 (RDE). E484 is a binding site for ATP. Position 491 (R491) interacts with L-aspartate. 536-539 (GVDR) lines the ATP pocket.

Belongs to the class-II aminoacyl-tRNA synthetase family. Type 1 subfamily. Homodimer.

The protein localises to the cytoplasm. It carries out the reaction tRNA(Asx) + L-aspartate + ATP = L-aspartyl-tRNA(Asx) + AMP + diphosphate. Aspartyl-tRNA synthetase with relaxed tRNA specificity since it is able to aspartylate not only its cognate tRNA(Asp) but also tRNA(Asn). Reaction proceeds in two steps: L-aspartate is first activated by ATP to form Asp-AMP and then transferred to the acceptor end of tRNA(Asp/Asn). This Rhodopseudomonas palustris (strain BisB5) protein is Aspartate--tRNA(Asp/Asn) ligase.